The sequence spans 420 residues: Serine--tRNA ligase (420 aa).

Residue 225–227 (TLE) coordinates L-serine. 256–258 (RQE) serves as a coordination point for ATP. Position 279 (Glu279) interacts with L-serine. 343–346 (EVSS) contributes to the ATP binding site. Thr379 is an L-serine binding site.

The protein belongs to the class-II aminoacyl-tRNA synthetase family. Type-1 seryl-tRNA synthetase subfamily. In terms of assembly, homodimer. The tRNA molecule binds across the dimer.

It localises to the cytoplasm. The catalysed reaction is tRNA(Ser) + L-serine + ATP = L-seryl-tRNA(Ser) + AMP + diphosphate + H(+). The enzyme catalyses tRNA(Sec) + L-serine + ATP = L-seryl-tRNA(Sec) + AMP + diphosphate + H(+). It functions in the pathway aminoacyl-tRNA biosynthesis; selenocysteinyl-tRNA(Sec) biosynthesis; L-seryl-tRNA(Sec) from L-serine and tRNA(Sec): step 1/1. Functionally, catalyzes the attachment of serine to tRNA(Ser). Is also able to aminoacylate tRNA(Sec) with serine, to form the misacylated tRNA L-seryl-tRNA(Sec), which will be further converted into selenocysteinyl-tRNA(Sec). In Mycoplasma pneumoniae (strain ATCC 29342 / M129 / Subtype 1) (Mycoplasmoides pneumoniae), this protein is Serine--tRNA ligase.